A 101-amino-acid polypeptide reads, in one-letter code: Small ribosomal subunit protein uS14A (101 aa).

The disordered stretch occupies residues 31–67 (LRRPSSTEAERLAAQRELRRQPRDASPTRVRNRDQID). Basic and acidic residues predominate over residues 38–53 (EAERLAAQRELRRQPR).

The protein belongs to the universal ribosomal protein uS14 family. In terms of assembly, part of the 30S ribosomal subunit. Contacts proteins S3 and S10.

Binds 16S rRNA, required for the assembly of 30S particles and may also be responsible for determining the conformation of the 16S rRNA at the A site. This is Small ribosomal subunit protein uS14A from Streptomyces coelicolor (strain ATCC BAA-471 / A3(2) / M145).